Reading from the N-terminus, the 285-residue chain is Polyamine aminopropyltransferase (285 aa).

In terms of domain architecture, PABS spans Asp5–Lys241. Gln35 lines the S-methyl-5'-thioadenosine pocket. 2 residues coordinate spermidine: His66 and Asp90. S-methyl-5'-thioadenosine contacts are provided by residues Asp110 and Asp141–Gly142. Asp160 serves as the catalytic Proton acceptor. Asp160 to Asp163 contributes to the spermidine binding site. Pro167 is an S-methyl-5'-thioadenosine binding site.

This sequence belongs to the spermidine/spermine synthase family. As to quaternary structure, homodimer or homotetramer.

The protein resides in the cytoplasm. It carries out the reaction S-adenosyl 3-(methylsulfanyl)propylamine + putrescine = S-methyl-5'-thioadenosine + spermidine + H(+). It participates in amine and polyamine biosynthesis; spermidine biosynthesis; spermidine from putrescine: step 1/1. Catalyzes the irreversible transfer of a propylamine group from the amino donor S-adenosylmethioninamine (decarboxy-AdoMet) to putrescine (1,4-diaminobutane) to yield spermidine. The polypeptide is Polyamine aminopropyltransferase (Xanthomonas oryzae pv. oryzae (strain MAFF 311018)).